The chain runs to 311 residues: Pyrimidine-specific ribonucleoside hydrolase RihA (311 aa).

His240 is a catalytic residue.

Belongs to the IUNH family. RihA subfamily.

In terms of biological role, hydrolyzes cytidine or uridine to ribose and cytosine or uracil, respectively. The chain is Pyrimidine-specific ribonucleoside hydrolase RihA from Salmonella dublin (strain CT_02021853).